A 741-amino-acid polypeptide reads, in one-letter code: ABC transporter D family member 2 (741 aa).

3 helical membrane-spanning segments follow: residues 39-59 (GSLG…FSLV), 119-139 (FLSL…SVSI), and 260-280 (VVVM…VSGF). Residues 131–409 (ARTMLSVSIA…LMVALSQAIG (279 aa)) form the ABC transmembrane type-1 domain. The 223-residue stretch at 518–740 (IKFENVSIVS…DDDHLKKPLS (223 aa)) folds into the ABC transporter domain. Position 551–558 (551–558 (GPNGSGKS)) interacts with ATP.

The protein belongs to the ABC transporter superfamily. ABCD family. Peroxisomal fatty acyl CoA transporter (TC 3.A.1.203) subfamily.

The protein resides in the membrane. This is ABC transporter D family member 2 (abcD2) from Dictyostelium discoideum (Social amoeba).